The chain runs to 106 residues: uncharacterized protein (106 aa).

This is an uncharacterized protein from Archaeoglobus fulgidus (strain ATCC 49558 / DSM 4304 / JCM 9628 / NBRC 100126 / VC-16).